Reading from the N-terminus, the 134-residue chain is Holo-[acyl-carrier-protein] synthase (134 aa).

Mg(2+)-binding residues include aspartate 8 and glutamate 57.

This sequence belongs to the P-Pant transferase superfamily. AcpS family. Mg(2+) is required as a cofactor.

Its subcellular location is the cytoplasm. It catalyses the reaction apo-[ACP] + CoA = holo-[ACP] + adenosine 3',5'-bisphosphate + H(+). Its function is as follows. Transfers the 4'-phosphopantetheine moiety from coenzyme A to a Ser of acyl-carrier-protein. In Rhizobium rhizogenes (strain K84 / ATCC BAA-868) (Agrobacterium radiobacter), this protein is Holo-[acyl-carrier-protein] synthase.